Consider the following 185-residue polypeptide: Ribosome-recycling factor (185 aa).

Residues 141 to 160 (RIQKDGEAGEDEVGRAEKEL) are disordered.

This sequence belongs to the RRF family.

The protein localises to the cytoplasm. Responsible for the release of ribosomes from messenger RNA at the termination of protein biosynthesis. May increase the efficiency of translation by recycling ribosomes from one round of translation to another. This Rhodococcus jostii (strain RHA1) protein is Ribosome-recycling factor.